Consider the following 74-residue polypeptide: Probable tetrachloroethene reductive dehalogenase membrane anchor protein (74 aa).

2 helical membrane-spanning segments follow: residues 11–31 (ALGLSLLYLALILVTFQISMG) and 40–60 (AGSILMVAGLIFSIIGVFLLM).

It belongs to the PceB family.

It is found in the cell inner membrane. May act as a membrane anchor for the tetrachloroethene reductive dehalogenase PceA. This chain is Probable tetrachloroethene reductive dehalogenase membrane anchor protein, found in Sulfurospirillum multivorans (Dehalospirillum multivorans).